A 253-amino-acid polypeptide reads, in one-letter code: Indole-3-glycerol phosphate synthase (253 aa).

This sequence belongs to the TrpC family.

The enzyme catalyses 1-(2-carboxyphenylamino)-1-deoxy-D-ribulose 5-phosphate + H(+) = (1S,2R)-1-C-(indol-3-yl)glycerol 3-phosphate + CO2 + H2O. The protein operates within amino-acid biosynthesis; L-tryptophan biosynthesis; L-tryptophan from chorismate: step 4/5. This chain is Indole-3-glycerol phosphate synthase, found in Bacillus thuringiensis subsp. konkukian (strain 97-27).